Here is a 359-residue protein sequence, read N- to C-terminus: Cell division protein ZipA (359 aa).

Residues 1 to 4 (MDLN) are Periplasmic-facing. A helical membrane pass occupies residues 5–25 (TILIILGILALVALVAHGLWS). Residues 26 to 359 (NRREKSQYFE…AEEEYLAKIK (334 aa)) lie on the Cytoplasmic side of the membrane. Residues 78–101 (PPVQQPLNTEPEPITQETPVRAEP) form a disordered region.

Belongs to the ZipA family. Interacts with FtsZ via their C-terminal domains.

It is found in the cell inner membrane. Essential cell division protein that stabilizes the FtsZ protofilaments by cross-linking them and that serves as a cytoplasmic membrane anchor for the Z ring. Also required for the recruitment to the septal ring of downstream cell division proteins. The polypeptide is Cell division protein ZipA (Mannheimia succiniciproducens (strain KCTC 0769BP / MBEL55E)).